The chain runs to 140 residues: Secreted RxLR effector protein 37 (140 aa).

A signal peptide spans 1–22 (MTYRLPFVAVILFVTAKHVVLA). A RxLR-dEER motif is present at residues 57-76 (RFLRQLEKKPGVNDKRDEER).

Belongs to the RxLR effector family.

The protein resides in the secreted. Its subcellular location is the host nucleus. It is found in the host cytoplasm. In terms of biological role, secreted effector that completely suppresses the host cell death induced by cell death-inducing proteins. The protein is Secreted RxLR effector protein 37 of Plasmopara viticola (Downy mildew of grapevine).